A 226-amino-acid chain; its full sequence is P24 oleosin isoform A (226 aa).

The tract at residues 1–76 is polar; that stretch reads MTTQVPPHSV…GILLLLAGLT (76 aa). The next 3 membrane-spanning stretches (helical) occupy residues 56-76, 90-110, and 111-131; these read VLAVLAGLPVGGILLLLAGLT, LFVLFSPVLVPATVAIGLAVA, and GFLTSGAFGLTALSSFSWILN. Residues 77–130 are hydrophobic; it reads LAGTLTGLAVATPLFVLFSPVLVPATVAIGLAVAGFLTSGAFGLTALSSFSWIL. 5 repeat units span residues 159-165, 166-173, 184-191, 192-199, and 200-207. The interval 159 to 173 is 2 X 7 AA tandem repeats; sequence GQKTKEVGQKTKEVG. Basic and acidic residues-rich tracts occupy residues 164-173 and 181-216; these read EVGQKTKEVG and QDTREAAARDAREAAARDAREAAARDAKVEARDVKR. Residues 164–226 are disordered; the sequence is EVGQKTKEVG…TTVTATTATA (63 aa). The tract at residues 184-207 is 3 X 8 AA tandem repeats; the sequence is REAAARDAREAAARDAREAAARDA. Residues 217–226 are compositionally biased toward low complexity; it reads TTVTATTATA.

It belongs to the oleosin family.

It is found in the lipid droplet. The protein localises to the membrane. Its function is as follows. May have a structural role to stabilize the lipid body during desiccation of the seed by preventing coalescence of the oil. Probably interacts with both lipid and phospholipid moieties of lipid bodies. May also provide recognition signals for specific lipase anchorage in lipolysis during seedling growth. The protein is P24 oleosin isoform A of Glycine max (Soybean).